A 449-amino-acid polypeptide reads, in one-letter code: Glutamyl-tRNA reductase (449 aa).

Residues 58-61 (TCNR), Ser-121, 126-128 (ETQ), and Gln-132 each bind substrate. Cys-59 acts as the Nucleophile in catalysis. 203 to 208 (GLGEMA) serves as a coordination point for NADP(+).

This sequence belongs to the glutamyl-tRNA reductase family. Homodimer.

It carries out the reaction (S)-4-amino-5-oxopentanoate + tRNA(Glu) + NADP(+) = L-glutamyl-tRNA(Glu) + NADPH + H(+). Its pathway is porphyrin-containing compound metabolism; protoporphyrin-IX biosynthesis; 5-aminolevulinate from L-glutamyl-tRNA(Glu): step 1/2. Functionally, catalyzes the NADPH-dependent reduction of glutamyl-tRNA(Glu) to glutamate 1-semialdehyde (GSA). This is Glutamyl-tRNA reductase from Helicobacter pylori (strain J99 / ATCC 700824) (Campylobacter pylori J99).